The chain runs to 778 residues: Dapper homolog 1 (778 aa).

2 stretches are compositionally biased toward basic and acidic residues: residues 1 to 10 (MKPDAAREPE) and 18 to 40 (AEAE…TRER). The interval 1 to 40 (MKPDAAREPEPLSPGRGAEAEGRWRERGEADTERQRTRER) is disordered. The interval 85–149 (DAAQRSRLEE…SEEHLETDSR (65 aa)) is required for self-association. Residues 85–149 (DAAQRSRLEE…SEEHLETDSR (65 aa)) are a coiled coil. Positions 125-134 (LDKQISDLRL) match the Nuclear export signal motif. Disordered regions lie at residues 305–324 (KTHP…DPTK), 359–386 (GGIT…QLES), 397–416 (AGAA…KAAS), 428–468 (ESMK…SQKN), 544–616 (EKPR…HKRT), and 694–721 (NCFG…SEES). Residues 375–386 (RSKDSKTDQLES) show a composition bias toward basic and acidic residues. Positions 432-443 (ESNQASAVSPKT) are enriched in polar residues. The short motif at 551 to 564 (KKCRFPDDSDTNKK) is the Bipartite nuclear localization signal element. A compositionally biased stretch (basic and acidic residues) spans 554 to 563 (RFPDDSDTNK). The span at 564 to 574 (KFRKTSAKGRR) shows a compositional bias: basic residues. The span at 694-704 (NCFGDSESSVS) shows a compositional bias: polar residues. The PDZ-binding motif lies at 768-778 (RSGSLKLMTTV). Phosphoserine; by PKA is present on Ser-769.

This sequence belongs to the dapper family. In terms of assembly, can form homodimers and heterodimers with DACT2 or DACT3. Interacts with CSNK1D, PKA catalytic subunit, PKC-type kinase, CSNK2A1, CSNK2B, DVL1, DLV2, DVAL3, VANGL1, VANGL2, CTNND1 and HDAC1. Interacts with GSK3B; the interaction is indicative for an association of DACT1 with the beta-catenin destruction complex. Interacts with GSK3A. Interacts with YWHAB; the interaction is enhanced by PKA phosphorylating DACT1 at Ser-769. Interacts with CTNNB1. In terms of tissue distribution, expressed in multiple tissues including brain, heart, kidney, liver and testis.

The protein localises to the cytoplasm. It localises to the nucleus. Its subcellular location is the synapse. Its function is as follows. Involved in regulation of intracellular signaling pathways during development. Specifically thought to play a role in canonical and/or non-canonical Wnt signaling pathways through interaction with DSH (Dishevelled) family proteins. The activation/inhibition of Wnt signaling may depend on the phosphorylation status. Proposed to regulate the degradation of CTNNB1/beta-catenin, thereby modulating the transcriptional activation of target genes of the Wnt signaling pathway. Its function in stabilizing CTNNB1 may involve inhibition of GSK3B activity. Promotes the membrane localization of CTNNB1. The cytoplasmic form can induce DVL2 degradation via a lysosome-dependent mechanism; the function is inhibited by PKA-induced binding to 14-3-3 proteins, such as YWHAB. Seems to be involved in morphogenesis at the primitive streak by regulating VANGL2 and DVL2; the function seems to be independent of canonical Wnt signaling and rather involves the non-canonical Wnt/planar cell polarity (PCP) pathway. The nuclear form may prevent the formation of LEF1:CTNNB1 complex and recruit HDAC1 to LEF1 at target gene promoters to repress transcription thus antagonizing Wnt signaling. May be involved in positive regulation of fat cell differentiation. During neuronal differentiation may be involved in excitatory synapse organization, and dendrite formation and establishment of spines. This chain is Dapper homolog 1 (Dact1), found in Mus musculus (Mouse).